The primary structure comprises 529 residues: Auxin response factor 13 (529 aa).

Residues 1 to 22 (MARPPAATAPPPPPPPPPPPPP) are disordered. Residues 7-22 (ATAPPPPPPPPPPPPP) are compositionally biased toward pro residues. Positions 128–234 (YAKQLTQSDA…KLLVGVRRAA (107 aa)) form a DNA-binding region, TF-B3. Disordered regions lie at residues 443-462 (IVTP…PLSA) and 497-529 (PEGV…GARL). The span at 444-461 (VTPQNGSPPDNPVNTPLS) shows a compositional bias: polar residues. The span at 499-510 (GVDDETATEEAS) shows a compositional bias: acidic residues. Over residues 511 to 523 (DTSLPDSLTNGHN) the composition is skewed to polar residues.

The protein belongs to the ARF family. In terms of assembly, homo and heterodimers. Expressed in roots, culms, leaves and young panicles.

It is found in the nucleus. Auxin response factors (ARFs) are transcriptional factors that bind specifically to the DNA sequence 5'-TGTCTC-3' found in the auxin-responsive promoter elements (AuxREs). This chain is Auxin response factor 13 (ARF13), found in Oryza sativa subsp. japonica (Rice).